We begin with the raw amino-acid sequence, 426 residues long: Glucose-6-phosphate isomerase (426 aa).

Glu-282 serves as the catalytic Proton donor. Active-site residues include His-303 and Lys-417.

It belongs to the GPI family.

The protein resides in the cytoplasm. The enzyme catalyses alpha-D-glucose 6-phosphate = beta-D-fructose 6-phosphate. It participates in carbohydrate biosynthesis; gluconeogenesis. The protein operates within carbohydrate degradation; glycolysis; D-glyceraldehyde 3-phosphate and glycerone phosphate from D-glucose: step 2/4. In terms of biological role, catalyzes the reversible isomerization of glucose-6-phosphate to fructose-6-phosphate. In Aster yellows witches'-broom phytoplasma (strain AYWB), this protein is Glucose-6-phosphate isomerase.